A 399-amino-acid polypeptide reads, in one-letter code: MIIKPRVRGFICVTAHPTGCEANVKKQIDYVTTEGPIANGPKRVLVIGASTGYGLAARITAAFGCGADTLGVFFERPGEEGKPGTSGWYNSAAFHKFAAQKGLYAKSINGDAFSDEIKQLTIDAIKQDLGQVDQVIYSLASPRRTHPKTGEVFNSALKPIGNAVNLRGLDTDKEVIKESVLQPATQSEIDSTVAVMGGEDWQMWIDALLDAGVLAEGAQTTAFTYLGEKITHDIYWNGSIGAAKKDLDQKVLAIRESLAAHGGGDARVSVLKAVVTQASSAIPMMPLYLSLLFKVMKEKGTHEGCIEQVYSLYKDSLCGDSPHMDQEGRLRADYKELDPEVQNQVQQLWDQVTNDNIYQLTDFVGYKSEFLNLFGFGIDGVDYDADVNPDVKIPNLIQG.

NAD(+) contacts are provided by residues 48–53 (GASTGY), 74–75 (FE), 111–112 (DA), and 139–140 (LA). Y225 is a substrate binding site. The active-site Proton donor is the Y235. NAD(+) is bound by residues K244 and 274–276 (VVT).

Belongs to the TER reductase family. Monomer.

The catalysed reaction is a 2,3-saturated acyl-[ACP] + NAD(+) = a (2E)-enoyl-[ACP] + NADH + H(+). Its pathway is lipid metabolism; fatty acid biosynthesis. Functionally, involved in the final reduction of the elongation cycle of fatty acid synthesis (FAS II). Catalyzes the reduction of a carbon-carbon double bond in an enoyl moiety that is covalently linked to an acyl carrier protein (ACP). This is Enoyl-[acyl-carrier-protein] reductase [NADH] from Yersinia pestis bv. Antiqua (strain Antiqua).